The following is a 154-amino-acid chain: 6,7-dimethyl-8-ribityllumazine synthase (154 aa).

Residues 22-23 (FN), 56-58 (SWE), and 80-82 (VLI) each bind 5-amino-6-(D-ribitylamino)uracil. Residue 85-86 (AT) coordinates (2S)-2-hydroxy-3-oxobutyl phosphate. Catalysis depends on His-88, which acts as the Proton donor. Residue Phe-113 coordinates 5-amino-6-(D-ribitylamino)uracil. Arg-127 is a (2S)-2-hydroxy-3-oxobutyl phosphate binding site. Lys-135 contacts 5-amino-6-(D-ribitylamino)uracil.

It belongs to the DMRL synthase family. As to quaternary structure, forms an icosahedral capsid composed of 60 subunits, arranged as a dodecamer of pentamers.

It carries out the reaction (2S)-2-hydroxy-3-oxobutyl phosphate + 5-amino-6-(D-ribitylamino)uracil = 6,7-dimethyl-8-(1-D-ribityl)lumazine + phosphate + 2 H2O + H(+). The protein operates within cofactor biosynthesis; riboflavin biosynthesis; riboflavin from 2-hydroxy-3-oxobutyl phosphate and 5-amino-6-(D-ribitylamino)uracil: step 1/2. Catalyzes the formation of 6,7-dimethyl-8-ribityllumazine by condensation of 5-amino-6-(D-ribitylamino)uracil with 3,4-dihydroxy-2-butanone 4-phosphate. This is the penultimate step in the biosynthesis of riboflavin. The polypeptide is 6,7-dimethyl-8-ribityllumazine synthase (ribH) (Aquifex aeolicus (strain VF5)).